A 479-amino-acid polypeptide reads, in one-letter code: Cardiolipin synthase A (479 aa).

2 helical membrane passes run 8–28 and 38–58; these read FFGYLLGMIHLLGIVAALHAL and IAWAMPLLFIPYLTLIPYLIF. PLD phosphodiesterase domains follow at residues 218 to 245 and 392 to 419; these read VNFRNHRKIVVVDGLLGFIGGHNVGDEY and QPGFLHQKVVLVDDDVSAIGSANLDNRS. Residues H223, K225, D230, H397, K399, and D404 contribute to the active site.

It belongs to the phospholipase D family. Cardiolipin synthase subfamily. ClsA sub-subfamily.

The protein localises to the cell inner membrane. It carries out the reaction 2 a 1,2-diacyl-sn-glycero-3-phospho-(1'-sn-glycerol) = a cardiolipin + glycerol. Functionally, catalyzes the reversible phosphatidyl group transfer from one phosphatidylglycerol molecule to another to form cardiolipin (CL) (diphosphatidylglycerol) and glycerol. In Pseudomonas putida (strain ATCC 700007 / DSM 6899 / JCM 31910 / BCRC 17059 / LMG 24140 / F1), this protein is Cardiolipin synthase A.